The following is a 223-amino-acid chain: Ribose-5-phosphate isomerase A (223 aa).

Residues 32 to 35 (TGST), 85 to 88 (DGAD), and 98 to 101 (KGGG) contribute to the substrate site. The Proton acceptor role is filled by glutamate 107. Lysine 125 contacts substrate.

It belongs to the ribose 5-phosphate isomerase family. In terms of assembly, homodimer.

The enzyme catalyses aldehydo-D-ribose 5-phosphate = D-ribulose 5-phosphate. The protein operates within carbohydrate degradation; pentose phosphate pathway; D-ribose 5-phosphate from D-ribulose 5-phosphate (non-oxidative stage): step 1/1. In terms of biological role, catalyzes the reversible conversion of ribose-5-phosphate to ribulose 5-phosphate. The protein is Ribose-5-phosphate isomerase A of Pseudomonas paraeruginosa (strain DSM 24068 / PA7) (Pseudomonas aeruginosa (strain PA7)).